The following is a 233-amino-acid chain: Biosynthetic peptidoglycan transglycosylase (233 aa).

A helical membrane pass occupies residues 17 to 37 (IVLAVLALVILPYALIFFYVL).

Belongs to the glycosyltransferase 51 family.

It is found in the cell inner membrane. The enzyme catalyses [GlcNAc-(1-&gt;4)-Mur2Ac(oyl-L-Ala-gamma-D-Glu-L-Lys-D-Ala-D-Ala)](n)-di-trans,octa-cis-undecaprenyl diphosphate + beta-D-GlcNAc-(1-&gt;4)-Mur2Ac(oyl-L-Ala-gamma-D-Glu-L-Lys-D-Ala-D-Ala)-di-trans,octa-cis-undecaprenyl diphosphate = [GlcNAc-(1-&gt;4)-Mur2Ac(oyl-L-Ala-gamma-D-Glu-L-Lys-D-Ala-D-Ala)](n+1)-di-trans,octa-cis-undecaprenyl diphosphate + di-trans,octa-cis-undecaprenyl diphosphate + H(+). It participates in cell wall biogenesis; peptidoglycan biosynthesis. In terms of biological role, peptidoglycan polymerase that catalyzes glycan chain elongation from lipid-linked precursors. In Rhizobium leguminosarum bv. trifolii (strain WSM2304), this protein is Biosynthetic peptidoglycan transglycosylase.